Consider the following 341-residue polypeptide: Phenylalanine--tRNA ligase alpha subunit (341 aa).

E254 serves as a coordination point for Mg(2+).

The protein belongs to the class-II aminoacyl-tRNA synthetase family. Phe-tRNA synthetase alpha subunit type 1 subfamily. As to quaternary structure, tetramer of two alpha and two beta subunits. Mg(2+) is required as a cofactor.

It is found in the cytoplasm. The enzyme catalyses tRNA(Phe) + L-phenylalanine + ATP = L-phenylalanyl-tRNA(Phe) + AMP + diphosphate + H(+). The sequence is that of Phenylalanine--tRNA ligase alpha subunit from Chlorobium phaeovibrioides (strain DSM 265 / 1930) (Prosthecochloris vibrioformis (strain DSM 265)).